The primary structure comprises 401 residues: Large ribosomal subunit protein uL4 (401 aa).

Belongs to the universal ribosomal protein uL4 family.

The chain is Large ribosomal subunit protein uL4 (RpL4) from Drosophila melanogaster (Fruit fly).